The following is a 644-amino-acid chain: Protein cueball (644 aa).

An N-terminal signal peptide occupies residues 1 to 26 (MIRIRFGMDVLLVVLLATCLLTPAHG). At 27-531 (TPLEWDFAVT…VCLTPRVWTS (505 aa)) the chain is on the extracellular side. N-linked (GlcNAc...) asparagine glycans are attached at residues asparagine 82 and asparagine 108. LDL-receptor class B repeat units follow at residues 121-166 (MNLF…DVCR), 167-211 (RKLY…DQLS), and 212-257 (DRLF…TNDA). Residues asparagine 175 and asparagine 190 are each glycosylated (N-linked (GlcNAc...) asparagine). N-linked (GlcNAc...) asparagine glycosylation is present at asparagine 313. EGF-like domains are found at residues 398-430 (EIRECHNYCVHGTCQMSELAYPKCYCQPGFTGE) and 433-471 (ELSVCSGLCLNGGHCRVSKDENEAPSCECPAKFGGARCE). 5 disulfide bridges follow: cysteine 402/cysteine 411, cysteine 406/cysteine 421, cysteine 437/cysteine 447, cysteine 441/cysteine 459, and cysteine 461/cysteine 470. Residues asparagine 473 and asparagine 508 are each glycosylated (N-linked (GlcNAc...) asparagine). The chain crosses the membrane as a helical span at residues 532 to 552 (SVIIILVVGIVSSLLLVAVIV). The Cytoplasmic segment spans residues 553–644 (HGIRRLYKPK…LIHNMEDDLY (92 aa)).

The protein belongs to the cueball family.

It localises to the cell membrane. Functionally, has a role in spermatogenesis and oogenesis. In Drosophila simulans (Fruit fly), this protein is Protein cueball.